Reading from the N-terminus, the 580-residue chain is Trafficking protein particle complex subunit 14 (580 aa).

Disordered stretches follow at residues 90–138 (GMPG…ATTL) and 480–533 (VSHP…RSGS). Over residues 105-116 (PGGGDPGGGGLF) the composition is skewed to gly residues. Residues 124 to 137 (THGPGPATSGGATT) are compositionally biased toward low complexity. The residue at position 491 (S491) is a Phosphoserine. Residues 492 to 502 (RKSSPSSPAVR) are compositionally biased toward low complexity. Residues 512–525 (LGRSQSFSHQQPSR) show a composition bias toward polar residues. Position 517 is a phosphoserine (S517). T541 carries the post-translational modification Phosphothreonine. The residue at position 546 (S546) is a Phosphoserine.

As to quaternary structure, component of the multisubunit TRAPP II complex, which includes at least TRAPPC1, TRAPPC2, TRAPPC2L, TRAPPC3, TRAPPC4, TRAPPC5, TRAPPC6A/B, TRAPPC9, TRAPPC10 and TRAPPC14. TRAPPC9, TRAPPC10 and TRAPPC14 are specific subunits of the TRAPP II complex. Interacts with alpha-tubulin during mitosis. Interacts with RAB3IP (via the N-terminal region); this interaction mediates RAB3IP association with the TRAPP II complex. Interacts with TRAPPC10. Interacts with FBF1. Broadly expressed. High levels in brain, cerebellum, testis and whole blood.

Its subcellular location is the cytoplasm. It is found in the cytoskeleton. The protein resides in the spindle. The protein localises to the vesicle. It localises to the midbody. Specific subunit of the TRAPP (transport protein particle) II complex, a highly conserved vesicle tethering complex that functions in late Golgi trafficking as a membrane tether. TRAPP II complex also has GEF activity toward RAB1A. TRAPPC14 is dispensable for TRAPPII complex integrity but mediates RAB3IP preciliary vesicle trafficking to the mother centriole during ciliogenesis. Modulates YAP1 activity as transcriptional regulator. The chain is Trafficking protein particle complex subunit 14 from Homo sapiens (Human).